Consider the following 292-residue polypeptide: Aspartate carbamoyltransferase catalytic subunit (292 aa).

The carbamoyl phosphate site is built by Arg-49 and Thr-50. Lys-77 contacts L-aspartate. Carbamoyl phosphate-binding residues include Arg-99, His-127, and Gln-130. The L-aspartate site is built by Arg-161 and Arg-211. Carbamoyl phosphate-binding residues include Gly-250 and Pro-251.

Belongs to the aspartate/ornithine carbamoyltransferase superfamily. ATCase family. As to quaternary structure, heterododecamer (2C3:3R2) of six catalytic PyrB chains organized as two trimers (C3), and six regulatory PyrI chains organized as three dimers (R2).

It catalyses the reaction carbamoyl phosphate + L-aspartate = N-carbamoyl-L-aspartate + phosphate + H(+). Its pathway is pyrimidine metabolism; UMP biosynthesis via de novo pathway; (S)-dihydroorotate from bicarbonate: step 2/3. Catalyzes the condensation of carbamoyl phosphate and aspartate to form carbamoyl aspartate and inorganic phosphate, the committed step in the de novo pyrimidine nucleotide biosynthesis pathway. The polypeptide is Aspartate carbamoyltransferase catalytic subunit (Campylobacter lari (strain RM2100 / D67 / ATCC BAA-1060)).